Reading from the N-terminus, the 269-residue chain is CCAAT/enhancer-binding protein delta (269 aa).

Disordered stretches follow at residues 1–48 (MSAA…PGAA), 97–133 (PLELLPGGPARPLGPGPAAPRLLKREPDWGDGDAPGS), and 151–219 (AAGQ…NQEM). Serine 2 carries the post-translational modification N-acetylserine. Low complexity-rich tracts occupy residues 36–48 (GAEPGALGEPGAA) and 97–107 (PLELLPGGPAR). Lysine 120 participates in a covalent cross-link: Glycyl lysine isopeptide (Lys-Gly) (interchain with G-Cter in SUMO). Over residues 155–175 (PTPPTSPEPPRSSPRQTPAPG) the composition is skewed to pro residues. A compositionally biased stretch (basic and acidic residues) spans 177–201 (AREKSAGKRGPDRGSPEYRQRRERN). Residues 191 to 254 (SPEYRQRRER…AGLRQFFKQL (64 aa)) form the bZIP domain. Residues 195 to 222 (RQRRERNNIAVRKSRDKAKRRNQEMQQK) are basic motif. The leucine-zipper stretch occupies residues 226 to 254 (LSAENEKLHQRVEQLTRDLAGLRQFFKQL).

The protein belongs to the bZIP family. C/EBP subfamily. In terms of assembly, binds DNA as a homodimer and as a heterodimer. Can form stable heterodimers with CEBPB. Can form stable heterodimers with CEBPA and CEBPE. Directly interacts with SPI1/PU.1; this interaction does not affect DNA-binding properties of each partner. Interacts with PRDM16.

It is found in the nucleus. Its function is as follows. Transcription activator that recognizes two different DNA motifs: the CCAAT homology common to many promoters and the enhanced core homology common to many enhancers. Important transcription factor regulating the expression of genes involved in immune and inflammatory responses. Transcriptional activator that enhances IL6 transcription alone and as heterodimer with CEBPB. The sequence is that of CCAAT/enhancer-binding protein delta (CEBPD) from Homo sapiens (Human).